The following is a 336-amino-acid chain: UPF0324 membrane protein spr0034 (336 aa).

The next 8 helical transmembrane spans lie at 65–84 (LLQY…QVFA), 91–113 (PVIL…FFAL), 118–140 (ATLV…APVI), 153–175 (VIFF…LHLS), 211–233 (SATI…LSYW), 249–271 (VFPL…TSLG), 286–305 (FLIV…VAMV), and 312–334 (ILLG…TLIG).

It belongs to the UPF0324 family.

The protein resides in the cell membrane. This chain is UPF0324 membrane protein spr0034, found in Streptococcus pneumoniae (strain ATCC BAA-255 / R6).